Consider the following 542-residue polypeptide: uncharacterized protein (542 aa).

The Extracellular portion of the chain corresponds to 1-78; that stretch reads MSVQKEEYDI…EEKKLVRKMD (78 aa). A helical membrane pass occupies residues 79-99; that stretch reads LKIFLWVFIMFAFLDLIRKNI. Topologically, residues 100–119 are cytoplasmic; it reads ARAVSDNFIVDLKMNTNDYN. The chain crosses the membrane as a helical span at residues 120–140; the sequence is LGQTVYLVIFLASELPGNLLS. Residues 141–147 lie on the Extracellular side of the membrane; sequence KRFGPER. The helical transmembrane segment at 148 to 168 threads the bilayer; that stretch reads VIPVQIVLWSVICITQAGLKN. At 169-176 the chain is on the cytoplasmic side; the sequence is RGQFIATR. The chain crosses the membrane as a helical span at residues 177 to 197; the sequence is CLLGMVQGGFIPDNILYLSYY. Topologically, residues 198–208 are extracellular; the sequence is YTGAELTFRLS. Residues 209 to 229 traverse the membrane as a helical segment; sequence FFWCAIPLFQILGSLLASGII. The Cytoplasmic segment spans residues 230 to 241; that stretch reads EMRGIHNLAGWQ. A helical transmembrane segment spans residues 242–262; that stretch reads YLFIIEGFLSLSVGVASFYLM. The Extracellular portion of the chain corresponds to 263 to 326; that stretch reads RRGPTQTGES…TLTEFDLWPL (64 aa). A helical transmembrane segment spans residues 327–347; sequence FIQGITAFISLQTVGSYLSLI. The Cytoplasmic segment spans residues 348–359; that stretch reads LKSLNYSTFLSN. Residues 360 to 380 form a helical membrane-spanning segment; the sequence is ILAIPGQALLLINLPLAALLS. The Extracellular portion of the chain corresponds to 381–387; sequence RKLKEKS. Residues 388–408 form a helical membrane-spanning segment; sequence LCVGIANVWVLPFIVSLVALP. The Cytoplasmic segment spans residues 409–416; sequence TDTNPWIK. Residues 417–437 traverse the membrane as a helical segment; that stretch reads YILLTGILGLPYTHSILAGWV. The Extracellular segment spans residues 438–482; that stretch reads SEISNSVRSRTVGTALYNMSAQVGAIIASNMYRNDDKPYYTRGNK. A helical membrane pass occupies residues 483–503; the sequence is ILLGFTCFNICMAVATKFYYI. Residues 504–542 lie on the Cytoplasmic side of the membrane; it reads SRNKYKDRKWNSMTKEEQINYLDTTKDKGMKRLDYRFIH.

This sequence belongs to the major facilitator superfamily. Allantoate permease family.

Its subcellular location is the membrane. This is an uncharacterized protein from Saccharomyces cerevisiae (strain ATCC 204508 / S288c) (Baker's yeast).